We begin with the raw amino-acid sequence, 176 residues long: dCTP deaminase (176 aa).

Residues 99–104 (RSTLAR) and Asp115 contribute to the dCTP site. Glu125 serves as the catalytic Proton donor/acceptor. Residue Gln163 participates in dCTP binding.

It belongs to the dCTP deaminase family. In terms of assembly, homotrimer.

The enzyme catalyses dCTP + H2O + H(+) = dUTP + NH4(+). It participates in pyrimidine metabolism; dUMP biosynthesis; dUMP from dCTP (dUTP route): step 1/2. Catalyzes the deamination of dCTP to dUTP. This is dCTP deaminase from Pyrobaculum neutrophilum (strain DSM 2338 / JCM 9278 / NBRC 100436 / V24Sta) (Thermoproteus neutrophilus).